We begin with the raw amino-acid sequence, 795 residues long: Inactive N-acetylated-alpha-linked acidic dipeptidase-like protein 2 (795 aa).

The disordered stretch occupies residues Met-1–Asn-38. The Cytoplasmic portion of the chain corresponds to Met-1–Asn-121. Residue Ser-92 is modified to Phosphoserine. Residues Phe-122–Ile-142 form a helical; Signal-anchor for type II membrane protein membrane-spanning segment. Topologically, residues Gly-143–Asn-795 are extracellular. N-linked (GlcNAc...) asparagine glycosylation is found at Asn-295, Asn-373, Asn-534, and Asn-759.

This sequence belongs to the peptidase M28 family. M28B subfamily. As to expression, expressed at higher level in kidney and placenta. In embryo, it is mainly confined to duodenal and stomach endoderm, mesonephros, metanephros and pancreas.

The protein resides in the membrane. Its function is as follows. May be catalytically inactive. The sequence is that of Inactive N-acetylated-alpha-linked acidic dipeptidase-like protein 2 (NAALADL2) from Homo sapiens (Human).